Reading from the N-terminus, the 379-residue chain is 1-deoxy-D-xylulose 5-phosphate reductoisomerase (379 aa).

6 residues coordinate NADPH: T10, G11, S12, I13, N39, and N121. K122 is a 1-deoxy-D-xylulose 5-phosphate binding site. Residue E123 participates in NADPH binding. D147 is a Mn(2+) binding site. Residues S148, E149, S173, and H196 each coordinate 1-deoxy-D-xylulose 5-phosphate. Mn(2+) is bound at residue E149. Residue G202 coordinates NADPH. 1-deoxy-D-xylulose 5-phosphate is bound by residues S209, N214, K215, and E218. A Mn(2+)-binding site is contributed by E218.

The protein belongs to the DXR family. Mg(2+) is required as a cofactor. Requires Mn(2+) as cofactor.

The catalysed reaction is 2-C-methyl-D-erythritol 4-phosphate + NADP(+) = 1-deoxy-D-xylulose 5-phosphate + NADPH + H(+). Its pathway is isoprenoid biosynthesis; isopentenyl diphosphate biosynthesis via DXP pathway; isopentenyl diphosphate from 1-deoxy-D-xylulose 5-phosphate: step 1/6. Catalyzes the NADPH-dependent rearrangement and reduction of 1-deoxy-D-xylulose-5-phosphate (DXP) to 2-C-methyl-D-erythritol 4-phosphate (MEP). The chain is 1-deoxy-D-xylulose 5-phosphate reductoisomerase from Chlamydia caviae (strain ATCC VR-813 / DSM 19441 / 03DC25 / GPIC) (Chlamydophila caviae).